We begin with the raw amino-acid sequence, 595 residues long: P2X purinoceptor 7 (595 aa).

The Cytoplasmic portion of the chain corresponds to 1–22 (MPACCSWNDVFQYETNKVTRIQ). A lipid anchor (S-palmitoyl cysteine) is attached at C4. The chain crosses the membrane as a helical span at residues 23 to 46 (SVNYGTIKWILHMTVFSYVSFALM). Over 47–328 (SDKLYQRKEP…ILVFGTGGKF (282 aa)) the chain is Extracellular. N-linked (GlcNAc...) asparagine glycosylation is present at N74. Cystine bridges form between C119-C168, C129-C152, and C135-C162. R125 is subject to ADP-ribosylarginine. N-linked (GlcNAc...) asparagine glycosylation occurs at N187. Position 189 (T189) interacts with ATP. N-linked (GlcNAc...) asparagine glycans are attached at residues N202 and N213. A disulfide bridge links C216 with C226. Residue N241 is glycosylated (N-linked (GlcNAc...) asparagine). C260 and C269 are disulfide-bonded. N284 carries N-linked (GlcNAc...) asparagine glycosylation. Positions 294 and 311 each coordinate ATP. Residues 329-353 (DIIQLVVYIGSTLSYFGLATVCIDL) traverse the membrane as a helical segment. S342 provides a ligand contact to Na(+). Residues 354-595 (IINTYASTCC…GQYSGFKYPY (242 aa)) lie on the Cytoplasmic side of the membrane. The tract at residues 360 to 377 (STCCRSRVYPSCKCCEPC) is C-cys anchor. S-palmitoyl cysteine attachment occurs at residues C362, C363, C374, and C377. The tract at residues 395–595 (KPTLKYVSFV…GQYSGFKYPY (201 aa)) is cytoplasmic ballast. Zn(2+) contacts are provided by C479, C499, and C506. R546, H547, Y550, and A567 together coordinate GTP. C572 is a binding site for Zn(2+). Residues K583, S589, and G590 each contribute to the GTP site.

This sequence belongs to the P2X receptor family. As to quaternary structure, homotrimer. Interacts with LAMA3, ITGB2, ACTB, ACTN4, SVIL, MPP3, HSPA1, HSPCB, HSPA8, PIK230 and PTPRB. Interacts (via C-terminus) with EMP2. In terms of processing, phosphorylation results in its inactivation. Post-translationally, ADP-ribosylation at Arg-125 is necessary and sufficient to activate P2RX7 and gate the channel. Palmitoylation of several cysteines in the C-terminal cytoplasmic tail is required for efficient localization to cell surface. Palmitoylation prevents channel desensitization by physically anchoring the palmitoylated groups to the membrane.

The protein localises to the cell membrane. It carries out the reaction Ca(2+)(in) = Ca(2+)(out). The enzyme catalyses K(+)(in) = K(+)(out). The catalysed reaction is Na(+)(in) = Na(+)(out). With respect to regulation, activated by high extracellular ATP levels (0.1-2.5 mM). The synthetic analog 2'(3')-O-(4-benzoylbenzoyl)ATP (BzATP) acts as a potent agonist. Does not undergo desensitization, instead, undergoes a facilitation process where currents progressively increase with repetitive or prolonged agonist application. Palmitoylation prevents channel desensitization. The permeability of the P2RX7 channel is modulated by the amount of cholesterol in the plasma membrane. Functionally, ATP-gated nonselective transmembrane cation channel that requires high millimolar concentrations of ATP for activation. Upon ATP binding, it rapidly opens to allow the influx of small cations Na(+) and Ca(2+), and the K(+) efflux. Also has the ability to form a large pore in the cell membrane, allowing the passage of large cationic molecules. In microglia, may mediate the transmembrane transport of exogenous NADPH. In immune cells, P2RX7 acts as a molecular sensor in pathological inflammatory states by detecting and responding to high local concentrations of extracellar ATP. In microglial cells, P2RX7 activation leads to the release of pro-inflammatory cytokines, such as IL-1beta and IL-18, through the activation of the NLRP3 inflammasome and caspase-1. Cooperates with KCNK6 to activate NLRP3 inflammasome. Activates death pathways leading to apoptosis and autophagy. Activates death pathways leading to pyroptosis. In terms of biological role, has a higher affinity for ATP, slower deactivation and an increased propensity to form large cation-permeable pores. The protein is P2X purinoceptor 7 (P2rx7) of Rattus norvegicus (Rat).